The sequence spans 386 residues: L-lactate oxidase (386 aa).

The FMN hydroxy acid dehydrogenase domain maps to 16–382 (AQAPFPICFA…RTITLVKNDG (367 aa)). Tyrosine 42 serves as a coordination point for pyruvate. FMN contacts are provided by residues 95–97 (PVG), serine 124, and glutamine 146. Residue tyrosine 148 coordinates pyruvate. Threonine 174 lines the FMN pocket. Residue arginine 183 coordinates pyruvate. Residues lysine 253 and serine 275 each contribute to the FMN site. Pyruvate contacts are provided by histidine 277 and arginine 280. The active-site Proton acceptor is histidine 277. FMN is bound by residues 308–312 (DSGVY) and arginine 332.

This sequence belongs to the FMN-dependent alpha-hydroxy acid dehydrogenase family. In terms of assembly, homotetramer. FMN is required as a cofactor.

It catalyses the reaction a (2S)-2-hydroxycarboxylate + O2 = a 2-oxocarboxylate + H2O2. The enzyme catalyses (S)-lactate + O2 = pyruvate + H2O2. The catalysed reaction is 2-hydroxyoctanoate + O2 = 2-oxooctanoate + H2O2. It carries out the reaction mandelate + O2 = phenylglyoxylate + H2O2. It catalyses the reaction 2-hydroxyoctadecanoate + O2 = 2-oxooctadecanoate + H2O2. The enzyme catalyses (S)-2-hydroxyglutarate + O2 = H2O2 + 2-oxoglutarate. Oxidase that catalyzes the oxidation of a broad range of 2-hydroxyacids in vitro, such as (S)-lactate, 2-hydroxyoctanoate, mandelate, 2-hydroxyoctadecanoate and (S)-2-hydroxyglutarate, to the corresponding 2-oxoacids, with a reduction of O2 to H2O2. May be involved in the utilization of L-lactate as an energy source for growth. This is L-lactate oxidase from Lysinibacillus sphaericus (strain C3-41).